A 410-amino-acid chain; its full sequence is 3-phenylpropionate/cinnamic acid dioxygenase ferredoxin--NAD(+) reductase component (410 aa).

5–36 (TIIIVGGGQAAAMAAASLRQQGFTGELHLFSD) provides a ligand contact to FAD. 146-184 (SVVIVGAGTIGLELAASATQRSAAQRSAAQRRCKVTVIE) lines the NAD(+) pocket.

Belongs to the bacterial ring-hydroxylating dioxygenase ferredoxin reductase family. This dioxygenase system consists of four proteins: the two subunits of the hydroxylase component (HcaE and HcaF), a ferredoxin (HcaC) and a ferredoxin reductase (HcaD). FAD serves as cofactor.

The catalysed reaction is 2 reduced [2Fe-2S]-[ferredoxin] + NAD(+) + H(+) = 2 oxidized [2Fe-2S]-[ferredoxin] + NADH. Its pathway is aromatic compound metabolism; 3-phenylpropanoate degradation. Functionally, part of the multicomponent 3-phenylpropionate dioxygenase, that converts 3-phenylpropionic acid (PP) and cinnamic acid (CI) into 3-phenylpropionate-dihydrodiol (PP-dihydrodiol) and cinnamic acid-dihydrodiol (CI-dihydrodiol), respectively. The chain is 3-phenylpropionate/cinnamic acid dioxygenase ferredoxin--NAD(+) reductase component from Shigella flexneri serotype 5b (strain 8401).